The primary structure comprises 204 residues: Holliday junction branch migration complex subunit RuvA (204 aa).

The segment at 1–64 is domain I; it reads MIGRLQGILL…EDAHLLFGFA (64 aa). The domain II stretch occupies residues 65–143; that stretch reads QKTDRTLFRE…GVKQSDFFVE (79 aa). The interval 144–155 is flexible linker; the sequence is STHIPLSPSIES. Residues 156–204 form a domain III region; it reads HSESSSDEAISALIALGYKPVEAEKMVKRVAKPELTSEQVIREALKVAL.

It belongs to the RuvA family. In terms of assembly, homotetramer. Forms an RuvA(8)-RuvB(12)-Holliday junction (HJ) complex. HJ DNA is sandwiched between 2 RuvA tetramers; dsDNA enters through RuvA and exits via RuvB. An RuvB hexamer assembles on each DNA strand where it exits the tetramer. Each RuvB hexamer is contacted by two RuvA subunits (via domain III) on 2 adjacent RuvB subunits; this complex drives branch migration. In the full resolvosome a probable DNA-RuvA(4)-RuvB(12)-RuvC(2) complex forms which resolves the HJ.

The protein resides in the cytoplasm. In terms of biological role, the RuvA-RuvB-RuvC complex processes Holliday junction (HJ) DNA during genetic recombination and DNA repair, while the RuvA-RuvB complex plays an important role in the rescue of blocked DNA replication forks via replication fork reversal (RFR). RuvA specifically binds to HJ cruciform DNA, conferring on it an open structure. The RuvB hexamer acts as an ATP-dependent pump, pulling dsDNA into and through the RuvAB complex. HJ branch migration allows RuvC to scan DNA until it finds its consensus sequence, where it cleaves and resolves the cruciform DNA. This Haemophilus influenzae (strain ATCC 51907 / DSM 11121 / KW20 / Rd) protein is Holliday junction branch migration complex subunit RuvA.